The chain runs to 108 residues: Large ribosomal subunit protein uL24 (108 aa).

Belongs to the universal ribosomal protein uL24 family. In terms of assembly, part of the 50S ribosomal subunit.

Functionally, one of two assembly initiator proteins, it binds directly to the 5'-end of the 23S rRNA, where it nucleates assembly of the 50S subunit. One of the proteins that surrounds the polypeptide exit tunnel on the outside of the subunit. In Trichlorobacter lovleyi (strain ATCC BAA-1151 / DSM 17278 / SZ) (Geobacter lovleyi), this protein is Large ribosomal subunit protein uL24.